The sequence spans 338 residues: Aspartate carbamoyltransferase catalytic subunit (338 aa).

Arg59 and Thr60 together coordinate carbamoyl phosphate. An L-aspartate-binding site is contributed by Lys87. Carbamoyl phosphate is bound by residues Arg109, His142, and Gln145. L-aspartate contacts are provided by Arg182 and Arg248. Gly289 and Pro290 together coordinate carbamoyl phosphate.

The protein belongs to the aspartate/ornithine carbamoyltransferase superfamily. ATCase family. Heterododecamer (2C3:3R2) of six catalytic PyrB chains organized as two trimers (C3), and six regulatory PyrI chains organized as three dimers (R2).

It carries out the reaction carbamoyl phosphate + L-aspartate = N-carbamoyl-L-aspartate + phosphate + H(+). The protein operates within pyrimidine metabolism; UMP biosynthesis via de novo pathway; (S)-dihydroorotate from bicarbonate: step 2/3. Its function is as follows. Catalyzes the condensation of carbamoyl phosphate and aspartate to form carbamoyl aspartate and inorganic phosphate, the committed step in the de novo pyrimidine nucleotide biosynthesis pathway. This Synechococcus elongatus (strain ATCC 33912 / PCC 7942 / FACHB-805) (Anacystis nidulans R2) protein is Aspartate carbamoyltransferase catalytic subunit.